Consider the following 519-residue polypeptide: Cytochrome P450 88A1 (519 aa).

The helical transmembrane segment at 1 to 21 (MLGVGMAAAVLLGAVALLLAD) threads the bilayer. Cys-466 is a heme binding site.

The protein belongs to the cytochrome P450 family. Requires heme as cofactor. In terms of tissue distribution, expressed in roots, developing leaves, the vegetative meristem, and suspension culture cells.

The protein localises to the membrane. The protein operates within plant hormone biosynthesis; gibberellin biosynthesis. This Zea mays (Maize) protein is Cytochrome P450 88A1 (CYP88A1).